Here is a 366-residue protein sequence, read N- to C-terminus: MIRTEEMLLNVGPQHPSTHGVFRLVIKIDGEIIKEATPVIGYLHRGTEKIAESLQYTQIIPYTDRMDYLSAMTNNYVICHAVETMMGLEIPERAEYLRVLAMELGRIASHLVWWGTNLLDIGAVSPFLYAFREREMIINLLNELCGARLTFNYMRVGGVKWDAPDGWIEKVKEFVPYMREQLAGYHDLVSGNEIFLNRVKGVGIYSAEEAISYSLSGANLRCTGVNWDLRKDEPYSIYDRFDFDIPVGSVGDAWDRYVCRMQEIEESLKIVEQAVQQFPKEGAVLAKVPKIIKAPKGEAFVRIESPRGEIGCYIASDGKKEPYRLKFRRPSFYNLQILPKLLKGENIANLITILGGVDIVLGEVDG.

Belongs to the complex I 49 kDa subunit family. In terms of assembly, NDH-1 is composed of 14 different subunits. Subunits NuoB, C, D, E, F, and G constitute the peripheral sector of the complex.

It is found in the cell membrane. The catalysed reaction is a quinone + NADH + 5 H(+)(in) = a quinol + NAD(+) + 4 H(+)(out). Functionally, NDH-1 shuttles electrons from NADH, via FMN and iron-sulfur (Fe-S) centers, to quinones in the respiratory chain. The immediate electron acceptor for the enzyme in this species is believed to be a menaquinone. Couples the redox reaction to proton translocation (for every two electrons transferred, four hydrogen ions are translocated across the cytoplasmic membrane), and thus conserves the redox energy in a proton gradient. The protein is NADH-quinone oxidoreductase subunit D of Bacillus anthracis.